Here is a 153-residue protein sequence, read N- to C-terminus: Aspartate carbamoyltransferase regulatory chain (153 aa).

Cysteine 110, cysteine 115, cysteine 138, and cysteine 141 together coordinate Zn(2+).

It belongs to the PyrI family. Contains catalytic and regulatory chains. The cofactor is Zn(2+).

In terms of biological role, involved in allosteric regulation of aspartate carbamoyltransferase. The polypeptide is Aspartate carbamoyltransferase regulatory chain (Bacteroides thetaiotaomicron (strain ATCC 29148 / DSM 2079 / JCM 5827 / CCUG 10774 / NCTC 10582 / VPI-5482 / E50)).